We begin with the raw amino-acid sequence, 814 residues long: Exostosin-like-3 homolog (814 aa).

At 1–14 (MAIKLNGSSRSFVP) the chain is on the cytoplasmic side. The chain crosses the membrane as a helical; Signal-anchor for type II membrane protein span at residues 15 to 35 (SLRVSAFLIFIFFVITYIIIY). Asparagine 36, asparagine 227, asparagine 297, asparagine 322, asparagine 454, and asparagine 492 each carry an N-linked (GlcNAc...) asparagine glycan. Over 36-814 (NVSFSEPSWI…QNHQKCFKYV (779 aa)) the chain is Lumenal. Residues arginine 570, asparagine 595, asparagine 620, arginine 625, aspartate 641, aspartate 642, and aspartate 643 each coordinate UDP-N-acetyl-alpha-D-glucosamine. Aspartate 643 lines the Mn(2+) pocket. An N-linked (GlcNAc...) asparagine glycan is attached at asparagine 685. Cysteine 726 and cysteine 774 form a disulfide bridge. 3 residues coordinate UDP-N-acetyl-alpha-D-glucosamine: glutamate 727, aspartate 728, and arginine 771. Residue aspartate 728 is part of the active site.

The protein belongs to the glycosyltransferase 47 family. In terms of assembly, interacts with rib-1. The cofactor is Mn(2+).

Its subcellular location is the endoplasmic reticulum membrane. It localises to the golgi apparatus membrane. It carries out the reaction 3-O-(beta-D-GlcA-(1-&gt;3)-beta-D-Gal-(1-&gt;3)-beta-D-Gal-(1-&gt;4)-beta-D-Xyl)-L-seryl-[protein] + UDP-N-acetyl-alpha-D-glucosamine = 3-O-(alpha-D-GlcNAc-(1-&gt;4)-beta-D-GlcA-(1-&gt;3)-beta-D-Gal-(1-&gt;3)-beta-D-Gal-(1-&gt;4)-beta-D-Xyl)-L-seryl-[protein] + UDP + H(+). The catalysed reaction is 3-O-{[(1-&gt;4)-beta-D-GlcA-(1-&gt;4)-alpha-D-GlcNAc](n)-(1-&gt;4)-beta-D-GlcA-(1-&gt;3)-beta-D-Gal-(1-&gt;3)-beta-D-Gal-(1-&gt;4)-beta-D-Xyl}-L-seryl-[protein] + UDP-N-acetyl-alpha-D-glucosamine = 3-O-{alpha-D-GlcNAc-[(1-&gt;4)-beta-D-GlcA-(1-&gt;4)-alpha-D-GlcNAc](n)-(1-&gt;4)-beta-D-GlcA-(1-&gt;3)-beta-D-Gal-(1-&gt;3)-beta-D-Gal-(1-&gt;4)-beta-D-Xyl}-L-seryl-[protein] + UDP + H(+). It catalyses the reaction 3-O-{alpha-D-GlcNAc-[(1-&gt;4)-beta-D-GlcA-(1-&gt;4)-alpha-D-GlcNAc](n)-(1-&gt;4)-beta-D-GlcA-(1-&gt;3)-beta-D-Gal-(1-&gt;3)-beta-D-Gal-(1-&gt;4)-beta-D-Xyl}-L-seryl-[protein] + UDP-alpha-D-glucuronate = 3-O-{[(1-&gt;4)-beta-D-GlcA-(1-&gt;4)-alpha-D-GlcNAc](n+1)-(1-&gt;4)-beta-D-GlcA-(1-&gt;3)-beta-D-Gal-(1-&gt;3)-beta-D-Gal-(1-&gt;4)-beta-D-Xyl}-L-seryl-[protein] + UDP + H(+). Its pathway is glycan metabolism; heparan sulfate biosynthesis. Binding to rib-1 is required for GlcAT-II activity and for increasing GlcNAc-II activity in vitro. Its function is as follows. Glycosyltransferase required for the biosynthesis of heparan sulfate. Initiates heparan sulfate synthesis by transferring GlcNAc to the (GlcA-Gal-Gal-Xyl-)Ser core linker (GlcNAcT-I activity). In association with rib-1, is also responsible for the alternating addition of beta-1-4-linked glucuronic acid (GlcA) and alpha-1-4-linked N-acetylglucosamine (GlcNAc) units to nascent heparan sulfate chains (GlcNAcT-II and GlcAT-II activities). Required for normal ventral epidermal enclosure during the early stages of embryonic development. In addition, involved in the elongation of the pharyngeal isthmus during the later stages of embryonic development. Involved in the directed migration of hermaphrodite-specific neurons. The polypeptide is Exostosin-like-3 homolog (rib-2) (Caenorhabditis elegans).